The sequence spans 419 residues: Tol-Pal system protein TolB (419 aa).

The signal sequence occupies residues 1 to 17; it reads MRFIGLVLLLLSVKLFG.

This sequence belongs to the TolB family. As to quaternary structure, the Tol-Pal system is composed of five core proteins: the inner membrane proteins TolA, TolQ and TolR, the periplasmic protein TolB and the outer membrane protein Pal. They form a network linking the inner and outer membranes and the peptidoglycan layer.

The protein localises to the periplasm. Functionally, part of the Tol-Pal system, which plays a role in outer membrane invagination during cell division and is important for maintaining outer membrane integrity. The chain is Tol-Pal system protein TolB from Helicobacter hepaticus (strain ATCC 51449 / 3B1).